Reading from the N-terminus, the 435-residue chain is Proline--tRNA ligase (435 aa).

The protein belongs to the class-II aminoacyl-tRNA synthetase family. ProS type 2 subfamily. Homodimer.

It localises to the cytoplasm. It catalyses the reaction tRNA(Pro) + L-proline + ATP = L-prolyl-tRNA(Pro) + AMP + diphosphate. Catalyzes the attachment of proline to tRNA(Pro) in a two-step reaction: proline is first activated by ATP to form Pro-AMP and then transferred to the acceptor end of tRNA(Pro). This chain is Proline--tRNA ligase (proS), found in Sulfurimonas denitrificans (strain ATCC 33889 / DSM 1251) (Thiomicrospira denitrificans (strain ATCC 33889 / DSM 1251)).